The primary structure comprises 122 residues: Large ribosomal subunit protein bL12 (122 aa).

This sequence belongs to the bacterial ribosomal protein bL12 family. As to quaternary structure, homodimer. Part of the ribosomal stalk of the 50S ribosomal subunit. Forms a multimeric L10(L12)X complex, where L10 forms an elongated spine to which 2 to 4 L12 dimers bind in a sequential fashion. Binds GTP-bound translation factors.

Functionally, forms part of the ribosomal stalk which helps the ribosome interact with GTP-bound translation factors. Is thus essential for accurate translation. In Enterococcus faecalis (strain ATCC 700802 / V583), this protein is Large ribosomal subunit protein bL12.